The following is a 162-amino-acid chain: SsrA-binding protein (162 aa).

A compositionally biased stretch (basic and acidic residues) spans His137–Arg154. Residues His137–Gly162 form a disordered region.

The protein belongs to the SmpB family.

It is found in the cytoplasm. Its function is as follows. Required for rescue of stalled ribosomes mediated by trans-translation. Binds to transfer-messenger RNA (tmRNA), required for stable association of tmRNA with ribosomes. tmRNA and SmpB together mimic tRNA shape, replacing the anticodon stem-loop with SmpB. tmRNA is encoded by the ssrA gene; the 2 termini fold to resemble tRNA(Ala) and it encodes a 'tag peptide', a short internal open reading frame. During trans-translation Ala-aminoacylated tmRNA acts like a tRNA, entering the A-site of stalled ribosomes, displacing the stalled mRNA. The ribosome then switches to translate the ORF on the tmRNA; the nascent peptide is terminated with the 'tag peptide' encoded by the tmRNA and targeted for degradation. The ribosome is freed to recommence translation, which seems to be the essential function of trans-translation. This chain is SsrA-binding protein, found in Aeromonas hydrophila subsp. hydrophila (strain ATCC 7966 / DSM 30187 / BCRC 13018 / CCUG 14551 / JCM 1027 / KCTC 2358 / NCIMB 9240 / NCTC 8049).